A 375-amino-acid chain; its full sequence is F-box/kelch-repeat protein At4g39580 (375 aa).

An F-box domain is found at 20 to 66 (PTTNLFLPDDILLSSLSRISRLYYPTFSLVSKSFRSLIASPELYQTR). 3 Kelch repeats span residues 132–178 (NIYA…VLDG), 179–225 (KIYV…KSVG), and 229–269 (KYHL…VINN).

This chain is F-box/kelch-repeat protein At4g39580, found in Arabidopsis thaliana (Mouse-ear cress).